Reading from the N-terminus, the 166-residue chain is Protein-export protein SecB (166 aa).

Belongs to the SecB family. In terms of assembly, homotetramer, a dimer of dimers. One homotetramer interacts with 1 SecA dimer.

The protein resides in the cytoplasm. Its function is as follows. One of the proteins required for the normal export of preproteins out of the cell cytoplasm. It is a molecular chaperone that binds to a subset of precursor proteins, maintaining them in a translocation-competent state. It also specifically binds to its receptor SecA. The sequence is that of Protein-export protein SecB from Rhizorhabdus wittichii (strain DSM 6014 / CCUG 31198 / JCM 15750 / NBRC 105917 / EY 4224 / RW1) (Sphingomonas wittichii).